Reading from the N-terminus, the 903-residue chain is Ras and Rab interactor 2 (903 aa).

The interval 44–73 (NGLEPSETHSMVRHKDGGYSEDKDGKTCPR) is disordered. The span at 56–73 (RHKDGGYSEDKDGKTCPR) shows a compositional bias: basic and acidic residues. Residues 97-190 (WLQLSLSEEE…VLPFTLKLPY (94 aa)) form the SH2 domain. Disordered regions lie at residues 282–455 (QDLS…EFDR) and 471–491 (EDYE…SKKK). Over residues 306 to 315 (SPPPRPPPPA) the composition is skewed to pro residues. The span at 318-338 (SLHTSPGLSRTEPQTSMPETV) shows a compositional bias: polar residues. At serine 366 the chain carries Phosphoserine. Residues 419-431 (APPPGSESQPPPC) show a composition bias toward pro residues. The span at 439 to 450 (SDMSLSTSSSDS) shows a compositional bias: low complexity. Residues 506-775 (LRKMSGVFSS…ARLLSSEARD (270 aa)) are interaction with RAB5B. Phosphoserine is present on serine 510. Phosphothreonine is present on threonine 518. Residues 627 to 766 (DGSWKQLKEN…IKNFQEEQAA (140 aa)) enclose the VPS9 domain. Residues 796 to 887 (FQNYLRVAFQ…FHFVYKRIKS (92 aa)) form the Ras-associating domain.

It belongs to the RIN (Ras interaction/interference) family. Homotetramer; probably composed of anti-parallel linkage of two parallel dimers. Interacts with Ras. Interacts with RAB5B, with a much higher affinity for GTP-bound activated RAB5B. Does not interact with other members of the Rab family.

It is found in the cytoplasm. Functionally, ras effector protein. May function as an upstream activator and/or downstream effector for RAB5B in endocytic pathway. May function as a guanine nucleotide exchange (GEF) of RAB5B, required for activating the RAB5 proteins by exchanging bound GDP for free GTP. The chain is Ras and Rab interactor 2 (Rin2) from Mus musculus (Mouse).